The sequence spans 466 residues: MEGKIIQVLGPVVDVEFESYLPAIFEALDINFEVNGVQKSLVLEVAAHLGGNRVRAIAMDMTEGLVRNQVVKARGKMIEVPVGEGVLGRIFNVVGESIDNLEPLKPSLIWPIHRKAPSFEQQSTKTEMFETGIKVIDLLAPYSKGGKVGLFGGAGVGKTVIIMELIHNVAYKHNGYSVFAGVGERTREGNDLYFEMKEGGVLDKVALCYGQMNEPPGARNRIAFTGLTMAEYFRDEKGLDVLMFIDNIFRYAQSGAEMSALLGRIPSAVGYQPTLAGEMGKLQERIASTKNGSITSVQAVYVPADDLTDPAPASVFAHLDATTVLNRKIAEKGIYPAVDPLDSTSRILSPQMIGEKHYEIATGIQQVLQKYKDLQDIIAILGLDELSEEDKKIVERARKIEKFLSQPFFVAEVFTGSPGKYVTLQETLEGFRGILEGKYDHIPENAFYMVGSIQEVLEKAKSMKNS.

152–159 serves as a coordination point for ATP; the sequence is GGAGVGKT.

The protein belongs to the ATPase alpha/beta chains family. In terms of assembly, F-type ATPases have 2 components, CF(1) - the catalytic core - and CF(0) - the membrane proton channel. CF(1) has five subunits: alpha(3), beta(3), gamma(1), delta(1), epsilon(1). CF(0) has three main subunits: a(1), b(2) and c(9-12). The alpha and beta chains form an alternating ring which encloses part of the gamma chain. CF(1) is attached to CF(0) by a central stalk formed by the gamma and epsilon chains, while a peripheral stalk is formed by the delta and b chains.

Its subcellular location is the cell inner membrane. The enzyme catalyses ATP + H2O + 4 H(+)(in) = ADP + phosphate + 5 H(+)(out). Its function is as follows. Produces ATP from ADP in the presence of a proton gradient across the membrane. The catalytic sites are hosted primarily by the beta subunits. The chain is ATP synthase subunit beta from Helicobacter acinonychis (strain Sheeba).